A 337-amino-acid chain; its full sequence is PHD finger protein 11 (337 aa).

The segment at 42–78 adopts a C2HC pre-PHD-type zinc-finger fold; it reads KRICALCPKDLECSVLYFAQSENIAAHENCLLYSSAL. Residues 108–160 form a PHD-type zinc finger; that stretch reads LKCTFCGKKGATVGCDLKSCFKNYHFFCAKNDHAVLQADGRTGIYKVFCQQHA.

Interacts with BRCA1 and RELA.

The protein resides in the nucleus. Positive regulator of Th1-type cytokine gene expression. The chain is PHD finger protein 11 (PHF11) from Bos taurus (Bovine).